A 232-amino-acid chain; its full sequence is Zinc-finger homeodomain protein 5 (232 aa).

Positions 1–11 (MELSEHEEDAG) are enriched in acidic residues. Residues 1–25 (MELSEHEEDAGDVGGGCSSPPTPPH) form a disordered region. The segment at 40 to 86 (YHECLRNHAAASGGHVVDGCGEFMPASTEEPLACAACGCHRSFHRRD) adopts a ZF-HD dimerization-type; degenerate zinc-finger fold. A disordered region spans residues 126-170 (GLPFPGYGTPSGGTGTTTASSSDERLRPSPVQPRRRSRTTFTREQ). The segment at residues 159–222 (RRRSRTTFTR…NNKHSFKQKQ (64 aa)) is a DNA-binding region (homeobox).

Homo- and heterodimer with other ZFHD proteins.

It localises to the nucleus. In terms of biological role, putative transcription factor. This Oryza sativa subsp. indica (Rice) protein is Zinc-finger homeodomain protein 5 (ZHD5).